A 340-amino-acid chain; its full sequence is Glycerol-3-phosphate dehydrogenase [NAD(P)+] (340 aa).

NADPH is bound by residues Ser-13, Trp-14, and Lys-108. The sn-glycerol 3-phosphate site is built by Lys-108, Gly-139, and Ser-141. Ala-143 lines the NADPH pocket. Residues Lys-194, Asp-247, Ser-257, Arg-258, and Asn-259 each contribute to the sn-glycerol 3-phosphate site. Lys-194 (proton acceptor) is an active-site residue. Arg-258 lines the NADPH pocket. The NADPH site is built by Val-282 and Glu-284.

Belongs to the NAD-dependent glycerol-3-phosphate dehydrogenase family.

It is found in the cytoplasm. The enzyme catalyses sn-glycerol 3-phosphate + NAD(+) = dihydroxyacetone phosphate + NADH + H(+). The catalysed reaction is sn-glycerol 3-phosphate + NADP(+) = dihydroxyacetone phosphate + NADPH + H(+). The protein operates within membrane lipid metabolism; glycerophospholipid metabolism. Functionally, catalyzes the reduction of the glycolytic intermediate dihydroxyacetone phosphate (DHAP) to sn-glycerol 3-phosphate (G3P), the key precursor for phospholipid synthesis. This is Glycerol-3-phosphate dehydrogenase [NAD(P)+] from Streptococcus thermophilus (strain ATCC BAA-491 / LMD-9).